Consider the following 194-residue polypeptide: Peptidyl-tRNA hydrolase (194 aa).

Tyr-17 provides a ligand contact to tRNA. His-22 serves as the catalytic Proton acceptor. TRNA contacts are provided by Phe-68, Asn-70, and Asn-116.

The protein belongs to the PTH family. Monomer.

It localises to the cytoplasm. It catalyses the reaction an N-acyl-L-alpha-aminoacyl-tRNA + H2O = an N-acyl-L-amino acid + a tRNA + H(+). In terms of biological role, hydrolyzes ribosome-free peptidyl-tRNAs (with 1 or more amino acids incorporated), which drop off the ribosome during protein synthesis, or as a result of ribosome stalling. Catalyzes the release of premature peptidyl moieties from peptidyl-tRNA molecules trapped in stalled 50S ribosomal subunits, and thus maintains levels of free tRNAs and 50S ribosomes. The chain is Peptidyl-tRNA hydrolase from Haemophilus influenzae (strain PittGG).